A 90-amino-acid chain; its full sequence is Probable Fe(2+)-trafficking protein (90 aa).

The protein belongs to the Fe(2+)-trafficking protein family.

Its function is as follows. Could be a mediator in iron transactions between iron acquisition and iron-requiring processes, such as synthesis and/or repair of Fe-S clusters in biosynthetic enzymes. The polypeptide is Probable Fe(2+)-trafficking protein (Vibrio campbellii (strain ATCC BAA-1116)).